The following is a 361-amino-acid chain: Protein C42 (361 aa).

Residues 32 to 36 (LLCDE) are LXCXE motif. The Nuclear localization signal signature appears at 357-360 (KRKK).

Belongs to the baculoviridae C42 protein family. Forms a complex with proteins E27 and p78/83. The interaction with p78/83 mediates nuclear translocation of P78/83. Interacts with protein Ac102. Interacts with IE0.

It is found in the host nucleus. The protein resides in the virion. Plays a role in host nuclear actin polymerization by recruiting p78/73 protein that is capable of activating an actin-related protein 2/3 complex to initiate nuclear actin polymerization. This chain is Protein C42, found in Lepidoptera (butterflies and moths).